An 802-amino-acid chain; its full sequence is Oligophrenin-1 (802 aa).

The PH domain maps to 265–368 (QPTIEGYLYT…WMEAMDGKEP (104 aa)). The Rho-GAP domain occupies 380–564 (MELNEVGFKF…ILIEHFGKIY (185 aa)). Disordered stretches follow at residues 569 to 588 (EESA…RHKP), 607 to 666 (LDES…EPCP), 680 to 770 (GGTK…NAGE), and 783 to 802 (FETA…GDES). Polar residues predominate over residues 616–627 (HQTPNGTITSSI). Residues 716-732 (HHKEGDADSFSKVRPPG) show a composition bias toward basic and acidic residues.

In terms of assembly, interacts with HOMER1. Interacts with AMPA receptor complexes. Interacts with SH3GL2 (endophilin-A1). Interacts (via C-terminus) with NR1D1. Expressed in brain.

It localises to the postsynapse. The protein localises to the presynapse. It is found in the cell projection. The protein resides in the axon. Its subcellular location is the dendritic spine. It localises to the dendrite. The protein localises to the cytoplasm. Stimulates GTP hydrolysis of members of the Rho family. Its action on RHOA activity and signaling is implicated in growth and stabilization of dendritic spines, and therefore in synaptic function. Critical for the stabilization of AMPA receptors at postsynaptic sites. Critical for the regulation of synaptic vesicle endocytosis at presynaptic terminals. Required for the localization of NR1D1 to dendrites, can suppress its repressor activity and protect it from proteasomal degradation. In Homo sapiens (Human), this protein is Oligophrenin-1 (OPHN1).